The sequence spans 510 residues: Dentin matrix acidic phosphoprotein 1 (510 aa).

A signal peptide spans 1–16 (MKTTILLMFLWGLSCA). A disordered region spans residues 23–510 (QNTESKSSEE…QDDNDCQDGY (488 aa)). 2 stretches are compositionally biased toward acidic residues: residues 61-77 (QANE…EVLG) and 101-119 (NKDD…DDDG). Composition is skewed to basic and acidic residues over residues 123–180 (PEER…RPEG), 273–288 (RLPE…DSRT), and 299–328 (PDSK…RSPE). The span at 333–343 (VQDPSSESSQE) shows a compositional bias: polar residues. The N-linked (GlcNAc...) asparagine glycan is linked to asparagine 351. The segment covering 358 to 367 (EALHESRGDN) has biased composition (basic and acidic residues). Positions 364–366 (RGD) match the Cell attachment site motif. The N-linked (GlcNAc...) asparagine glycan is linked to asparagine 370. A compositionally biased stretch (basic and acidic residues) spans 407–417 (SESHESLRSSE). 2 N-linked (GlcNAc...) asparagine glycosylation sites follow: asparagine 427 and asparagine 464. A compositionally biased stretch (basic and acidic residues) spans 481-499 (TEVESRKLTVDAYHNKPIG). A compositionally biased stretch (acidic residues) spans 500–510 (DQDDNDCQDGY).

Interacts with importin alpha. Phosphorylated in the cytosol and extracellular matrix and unphosphorylated in the nucleus. Phosphorylation is necessary for nucleocytoplasmic transport and may be catalyzed by a nuclear isoform of CK2 and can be augmented by calcium. Phosphorylated (in vitro) by FAM20C in the extracellular medium at sites within the S-x-E/pS motif. As to expression, expressed in fetal brain, bone and tooth particularly in odontoblast, but not in ameloblast. Not expressed in liver and skin.

The protein resides in the nucleus. It is found in the cytoplasm. Its subcellular location is the secreted. It localises to the extracellular space. The protein localises to the extracellular matrix. In terms of biological role, may have a dual function during osteoblast differentiation. In the nucleus of undifferentiated osteoblasts, unphosphorylated form acts as a transcriptional component for activation of osteoblast-specific genes like osteocalcin. During the osteoblast to osteocyte transition phase it is phosphorylated and exported into the extracellular matrix, where it regulates nucleation of hydroxyapatite. In Bos taurus (Bovine), this protein is Dentin matrix acidic phosphoprotein 1 (DMP1).